Reading from the N-terminus, the 445-residue chain is GTPase Der (445 aa).

2 consecutive EngA-type G domains span residues 3–167 and 180–353; these read PVIA…YADQ and IKIA…AAAM. GTP-binding positions include 9–16, 56–60, 119–122, 186–193, 233–237, and 298–301; these read GRPNVGKS, DTGGF, NKAE, DTAGL, and NKWD. The 85-residue stretch at 354 to 438 folds into the KH-like domain; that stretch reads AKLPTPKLTR…PLRIEFRSST (85 aa).

It belongs to the TRAFAC class TrmE-Era-EngA-EngB-Septin-like GTPase superfamily. EngA (Der) GTPase family. As to quaternary structure, associates with the 50S ribosomal subunit.

Its function is as follows. GTPase that plays an essential role in the late steps of ribosome biogenesis. This Burkholderia multivorans (strain ATCC 17616 / 249) protein is GTPase Der.